The primary structure comprises 150 residues: MKTFHLRKEDVKRDWYIIDAKGKNLGRLASLIANVLRGKHKPTFQPDVDCGDYVVVINADKFTVTGKKLTDKEYKFHTNAPGGLKVRNLQWMIEHKPTEALALAVERMLPKNKLQKRYMKRLKLYAGETHPHTAQNLKPLEEVSKLWKAI.

It belongs to the universal ribosomal protein uL13 family. As to quaternary structure, part of the 50S ribosomal subunit.

Functionally, this protein is one of the early assembly proteins of the 50S ribosomal subunit, although it is not seen to bind rRNA by itself. It is important during the early stages of 50S assembly. This chain is Large ribosomal subunit protein uL13, found in Sulfurihydrogenibium sp. (strain YO3AOP1).